Consider the following 32-residue polypeptide: Growth hormone-related protein 4 (32 aa).

A disulfide bridge links Cys-4 with Cys-11.

The protein belongs to the somatotropin/prolactin family. Post-translationally, glycosylated. Placental basal zone cells.

The protein resides in the secreted. The protein is Growth hormone-related protein 4 of Rattus norvegicus (Rat).